The sequence spans 408 residues: MDAFTENLNKLAELAIRVGLNLEEGQEIVATAPIEAVDFVRLLAEKAYENGASLFTVLYGDNLIARKRLALVPEAHLDRAPAWLYEGMAKAFHEGAARLAVSGNDPKALEGLPPERVGRAQQAQSRAYRPTLSAITEFVTNWTIVPFAHPGWAKAVFPGLPEEEAVQRLWQAIFQATRVDQEDPVAAWEAHNRVLHAKVAFLNEKRFHALHFQGPGTDLTVGLAEGHLWQGGATPTKKGRLCNPNLPTEEVFTAPHRERVEGVVRASRPLALSGQLVEGLWARFEGGVAVEVGAEKGEEVLKKLLDTDEGARRLGEVALVPADNPIAKTGLVFFDTLFDENAASHIAFGQAYAENLEGRPSGEEFRRRGGNESMVHVDWMIGSEEVDVDGLLEDGTRVPLMRRGRWVI.

E250, E316, E340, H345, H376, and D378 together coordinate a divalent metal cation.

This sequence belongs to the peptidase M29 family. Homodimer. Co(2+) is required as a cofactor. It depends on Zn(2+) as a cofactor. Mg(2+) serves as cofactor.

Metal-dependent exopeptidase. In Thermus aquaticus, this protein is Aminopeptidase T.